A 222-amino-acid polypeptide reads, in one-letter code: Deoxyribose-phosphate aldolase (222 aa).

The active-site Proton donor/acceptor is Asp93. Lys156 acts as the Schiff-base intermediate with acetaldehyde in catalysis. Lys186 acts as the Proton donor/acceptor in catalysis.

It belongs to the DeoC/FbaB aldolase family. DeoC type 1 subfamily.

The protein resides in the cytoplasm. The enzyme catalyses 2-deoxy-D-ribose 5-phosphate = D-glyceraldehyde 3-phosphate + acetaldehyde. It participates in carbohydrate degradation; 2-deoxy-D-ribose 1-phosphate degradation; D-glyceraldehyde 3-phosphate and acetaldehyde from 2-deoxy-alpha-D-ribose 1-phosphate: step 2/2. Catalyzes a reversible aldol reaction between acetaldehyde and D-glyceraldehyde 3-phosphate to generate 2-deoxy-D-ribose 5-phosphate. The polypeptide is Deoxyribose-phosphate aldolase (Corynebacterium glutamicum (strain ATCC 13032 / DSM 20300 / JCM 1318 / BCRC 11384 / CCUG 27702 / LMG 3730 / NBRC 12168 / NCIMB 10025 / NRRL B-2784 / 534)).